The following is a 77-amino-acid chain: Small ribosomal subunit protein bS18 (77 aa).

This sequence belongs to the bacterial ribosomal protein bS18 family. As to quaternary structure, part of the 30S ribosomal subunit. Forms a tight heterodimer with protein bS6.

Its function is as follows. Binds as a heterodimer with protein bS6 to the central domain of the 16S rRNA, where it helps stabilize the platform of the 30S subunit. The chain is Small ribosomal subunit protein bS18 from Bacillus thuringiensis subsp. konkukian (strain 97-27).